The sequence spans 459 residues: tRNA modification GTPase MnmE (459 aa).

Residues Arg-24, Glu-82, and Lys-122 each contribute to the (6S)-5-formyl-5,6,7,8-tetrahydrofolate site. The TrmE-type G domain occupies 219 to 379 (GIKVVISGAP…LRQHLYFSFK (161 aa)). Residues 229–234 (NSGKSS), 248–254 (TNFPGTT), and 273–276 (DTAG) each bind GTP. Mg(2+)-binding residues include Ser-233 and Thr-254. Lys-459 lines the (6S)-5-formyl-5,6,7,8-tetrahydrofolate pocket.

Belongs to the TRAFAC class TrmE-Era-EngA-EngB-Septin-like GTPase superfamily. TrmE GTPase family. As to quaternary structure, homodimer. Heterotetramer of two MnmE and two MnmG subunits. K(+) is required as a cofactor.

It localises to the cytoplasm. In terms of biological role, exhibits a very high intrinsic GTPase hydrolysis rate. Involved in the addition of a carboxymethylaminomethyl (cmnm) group at the wobble position (U34) of certain tRNAs, forming tRNA-cmnm(5)s(2)U34. The chain is tRNA modification GTPase MnmE from Buchnera aphidicola subsp. Baizongia pistaciae (strain Bp).